The sequence spans 256 residues: 5'-nucleotidase SurE (256 aa).

The a divalent metal cation site is built by aspartate 8, aspartate 9, serine 40, and asparagine 92.

It belongs to the SurE nucleotidase family. A divalent metal cation serves as cofactor.

The protein localises to the cytoplasm. The enzyme catalyses a ribonucleoside 5'-phosphate + H2O = a ribonucleoside + phosphate. In terms of biological role, nucleotidase that shows phosphatase activity on nucleoside 5'-monophosphates. This chain is 5'-nucleotidase SurE, found in Sinorhizobium medicae (strain WSM419) (Ensifer medicae).